The following is a 396-amino-acid chain: S-adenosylmethionine synthase (396 aa).

His-15 contributes to the ATP binding site. Asp-17 is a binding site for Mg(2+). Residue Glu-43 participates in K(+) binding. Glu-56 and Gln-99 together coordinate L-methionine. A flexible loop region spans residues 99–109; that stretch reads QSGDIAQGVDT. ATP is bound by residues 173 to 175, 241 to 242, Asp-250, 256 to 257, Ala-273, and Lys-277; these read DGK, RF, and RK. Asp-250 serves as a coordination point for L-methionine. Lys-281 is an L-methionine binding site.

Belongs to the AdoMet synthase family. As to quaternary structure, homotetramer; dimer of dimers. Mg(2+) serves as cofactor. Requires K(+) as cofactor.

It is found in the cytoplasm. It catalyses the reaction L-methionine + ATP + H2O = S-adenosyl-L-methionine + phosphate + diphosphate. Its pathway is amino-acid biosynthesis; S-adenosyl-L-methionine biosynthesis; S-adenosyl-L-methionine from L-methionine: step 1/1. Catalyzes the formation of S-adenosylmethionine (AdoMet) from methionine and ATP. The overall synthetic reaction is composed of two sequential steps, AdoMet formation and the subsequent tripolyphosphate hydrolysis which occurs prior to release of AdoMet from the enzyme. This is S-adenosylmethionine synthase from Nocardioides sp. (strain ATCC BAA-499 / JS614).